Reading from the N-terminus, the 291-residue chain is Pentonolactonase XacC (291 aa).

Glu15, Asn141, and Asp191 together coordinate a divalent metal cation. The active-site Proton donor/acceptor is the Asp191.

Belongs to the SMP-30/CGR1 family. In terms of assembly, monomer. A divalent metal cation is required as a cofactor.

The enzyme catalyses L-arabinono-1,4-lactone + H2O = L-arabinonate + H(+). The catalysed reaction is D-xylono-1,4-lactone + H2O = D-xylonate + H(+). The protein operates within carbohydrate degradation. Its function is as follows. Pentonolactonase involved in D-arabinose and D-xylose catabolism. Catalyzes the hydrolysis of both L-arabino-gamma-lactone and D-xylono-gamma-lactone to the corresponding acids. Can also hydrolyze D-galactono-gamma-lactone and D-glucono-delta-lactone. This is Pentonolactonase XacC from Haloferax volcanii (strain ATCC 29605 / DSM 3757 / JCM 8879 / NBRC 14742 / NCIMB 2012 / VKM B-1768 / DS2) (Halobacterium volcanii).